The primary structure comprises 78 residues: Large ribosomal subunit protein bL28 (78 aa).

The protein belongs to the bacterial ribosomal protein bL28 family.

The protein is Large ribosomal subunit protein bL28 of Flavobacterium johnsoniae (strain ATCC 17061 / DSM 2064 / JCM 8514 / BCRC 14874 / CCUG 350202 / NBRC 14942 / NCIMB 11054 / UW101) (Cytophaga johnsonae).